The following is a 374-amino-acid chain: Putative serine/threonine-protein kinase ZK507.3 (374 aa).

Residues 25-296 (WKVIVELGKG…CKLTLKEPLV (272 aa)) form the Protein kinase domain. ATP is bound by residues 31–39 (LGKGGYGTV) and K60. D158 acts as the Proton acceptor in catalysis. A disordered region spans residues 302–374 (NDNESGSTPT…KTRNKKPSRK (73 aa)). Over residues 306–324 (SGSTPTTSATACSPSSSTG) the composition is skewed to low complexity. The span at 334 to 343 (IASNIDQKSI) shows a compositional bias: polar residues. Residues 364 to 374 (TKTRNKKPSRK) are compositionally biased toward basic residues.

The protein belongs to the protein kinase superfamily. Ser/Thr protein kinase family.

The enzyme catalyses L-seryl-[protein] + ATP = O-phospho-L-seryl-[protein] + ADP + H(+). It catalyses the reaction L-threonyl-[protein] + ATP = O-phospho-L-threonyl-[protein] + ADP + H(+). In Caenorhabditis elegans, this protein is Putative serine/threonine-protein kinase ZK507.3.